Reading from the N-terminus, the 427-residue chain is Histidine--tRNA ligase (427 aa).

Belongs to the class-II aminoacyl-tRNA synthetase family. In terms of assembly, homodimer.

It localises to the cytoplasm. It catalyses the reaction tRNA(His) + L-histidine + ATP = L-histidyl-tRNA(His) + AMP + diphosphate + H(+). This chain is Histidine--tRNA ligase, found in Aster yellows witches'-broom phytoplasma (strain AYWB).